The primary structure comprises 141 residues: Large ribosomal subunit protein uL11 (141 aa).

The protein belongs to the universal ribosomal protein uL11 family. Part of the ribosomal stalk of the 50S ribosomal subunit. Interacts with L10 and the large rRNA to form the base of the stalk. L10 forms an elongated spine to which L12 dimers bind in a sequential fashion forming a multimeric L10(L12)X complex. Post-translationally, one or more lysine residues are methylated.

Its function is as follows. Forms part of the ribosomal stalk which helps the ribosome interact with GTP-bound translation factors. The protein is Large ribosomal subunit protein uL11 of Natranaerobius thermophilus (strain ATCC BAA-1301 / DSM 18059 / JW/NM-WN-LF).